A 512-amino-acid polypeptide reads, in one-letter code: Endoglucanase 14 (512 aa).

An N-terminal signal peptide occupies residues 1-22 (MLAAAIELVVIATSCMVRDAHG). Residue Asn-76 is glycosylated (N-linked (GlcNAc...) asparagine). Catalysis depends on Asp-103, which acts as the Nucleophile. N-linked (GlcNAc...) asparagine glycans are attached at residues Asn-192 and Asn-215. Catalysis depends on residues His-433, Asp-484, and Glu-493.

Belongs to the glycosyl hydrolase 9 (cellulase E) family.

Its subcellular location is the secreted. The catalysed reaction is Endohydrolysis of (1-&gt;4)-beta-D-glucosidic linkages in cellulose, lichenin and cereal beta-D-glucans.. This Oryza sativa subsp. japonica (Rice) protein is Endoglucanase 14.